Consider the following 570-residue polypeptide: Methionine--tRNA ligase (570 aa).

Positions 11–21 (PYVQTVPHLGN) match the 'HIGH' region motif. Zn(2+) contacts are provided by Cys-143, Cys-146, Cys-156, and Cys-159. Positions 333–337 (KFSKS) match the 'KMSKS' region motif. Position 336 (Lys-336) interacts with ATP.

This sequence belongs to the class-I aminoacyl-tRNA synthetase family. MetG type 1 subfamily. Zn(2+) is required as a cofactor.

It is found in the cytoplasm. The enzyme catalyses tRNA(Met) + L-methionine + ATP = L-methionyl-tRNA(Met) + AMP + diphosphate. Functionally, is required not only for elongation of protein synthesis but also for the initiation of all mRNA translation through initiator tRNA(fMet) aminoacylation. The protein is Methionine--tRNA ligase of Pyrobaculum aerophilum (strain ATCC 51768 / DSM 7523 / JCM 9630 / CIP 104966 / NBRC 100827 / IM2).